We begin with the raw amino-acid sequence, 142 residues long: Cellulose/chitin binding protein BQ2027_MB2009 (142 aa).

The signal sequence occupies residues methionine 1–alanine 37. Residues alanine 38 to threonine 142 form the CBM2 domain.

The protein resides in the secreted. Its subcellular location is the cell wall. The protein localises to the cell membrane. In terms of biological role, carbohydrate binding protein that binds chitin and cellulose. Lacks enzymatic activity and does not hydrolyze chitin and cellulose. May interact with mycobacterial biofilms, which are rich in cellulose, and play a role in biofilm formation. Could also act as an adhesin, improving the initial attachment to host cells and aiding M.bovis during the initial stages of infection. Functionally, may act as a virulence factor that modulates host immune responses and contributes to host immune evasion. The polypeptide is Cellulose/chitin binding protein BQ2027_MB2009 (Mycobacterium bovis (strain ATCC BAA-935 / AF2122/97)).